The sequence spans 123 residues: Insulin-like peptide-1 (123 aa).

The N-terminal stretch at 1 to 24 (MTTSSYFLLVALGLLLYVCQSSFG) is a signal peptide. Intrachain disulfides connect Cys-29-Cys-106, Cys-41-Cys-109, Cys-53-Cys-122, and Cys-108-Cys-113. The residue at position 34 (Pro-34) is a 4-hydroxyproline; partial. A propeptide spans 59 to 102 (EQGGANNARAYTGRTSSLMKRRGFLSLLKKRGKRDEGSLQRSGR) (c peptide). At Glu-107 the chain carries 4-carboxyglutamate. Glu-117 bears the 4-carboxyglutamate; partial mark.

The protein belongs to the insulin family. As to quaternary structure, heterodimer of A and B chains; disulfide-linked. Expressed by the venom duct.

It localises to the secreted. In terms of biological role, this venom insulin facilitates prey capture by rapidly inducing hypoglycemic shock. Intraperitoneal injection of this peptide into zebrafish lowers blood glucose with the same potency than human insulin. In vivo, when applied to water, this peptide reduces overall locomotor activity of zebrafish larvae, observed as a significant decrease in the percentage of time spent swimming and movement frequency. The polypeptide is Insulin-like peptide-1 (Conus victoriae (Queen Victoria cone)).